The following is a 132-amino-acid chain: Small ribosomal subunit protein uS8 (132 aa).

Belongs to the universal ribosomal protein uS8 family. Part of the 30S ribosomal subunit. Contacts proteins S5 and S12.

Functionally, one of the primary rRNA binding proteins, it binds directly to 16S rRNA central domain where it helps coordinate assembly of the platform of the 30S subunit. The chain is Small ribosomal subunit protein uS8 from Streptomyces griseus subsp. griseus (strain JCM 4626 / CBS 651.72 / NBRC 13350 / KCC S-0626 / ISP 5235).